The primary structure comprises 216 residues: Type-4 uracil-DNA glycosylase (216 aa).

Residues Cys-14 and Cys-17 each coordinate [4Fe-4S] cluster. Uracil-binding positions include 41-43, Phe-55, and Asn-82; that span reads GEA. The [4Fe-4S] cluster site is built by Cys-86 and Cys-102. His-164 serves as a coordination point for uracil.

It belongs to the uracil-DNA glycosylase (UDG) superfamily. Type 4 (UDGa) family. In terms of assembly, interacts with the sliding clamp PCNA3 subunit.

It catalyses the reaction Hydrolyzes single-stranded DNA or mismatched double-stranded DNA and polynucleotides, releasing free uracil.. Its function is as follows. Removes uracil bases that are present in DNA as a result of either deamination of cytosine or misincorporation of dUMP instead of dTMP. Can remove uracil from double-stranded DNA containing either a U/G or U/A base pair as well as from single-stranded DNA. The chain is Type-4 uracil-DNA glycosylase from Saccharolobus solfataricus (strain ATCC 35092 / DSM 1617 / JCM 11322 / P2) (Sulfolobus solfataricus).